A 334-amino-acid polypeptide reads, in one-letter code: Protein OPG181 (334 aa).

Belongs to the orthopoxvirus OPG181 family.

The sequence is that of Protein OPG181 (OPG181) from Vaccinia virus (strain Copenhagen) (VACV).